Here is a 183-residue protein sequence, read N- to C-terminus: MSEQTFHGTTILCAKRNGEMVIGGDGQVTLGHVVMKGNARKVRRLFNGKILAGFAGATADAFTLFERFEGKLQTHNGQLMRAAVEMAKDWRTDRALRKLEAMMLVADADNMLLISGTGDVIEPAHDFISIGSGGSYAHSAAQALMENTDLSAKDVVEKALNIAADLCIYTNHNLTIESLNKED.

The active site involves T9. Na(+) contacts are provided by A164, C167, and T170.

Belongs to the peptidase T1B family. HslV subfamily. In terms of assembly, a double ring-shaped homohexamer of HslV is capped on each side by a ring-shaped HslU homohexamer. The assembly of the HslU/HslV complex is dependent on binding of ATP.

The protein resides in the cytoplasm. The enzyme catalyses ATP-dependent cleavage of peptide bonds with broad specificity.. Allosterically activated by HslU binding. Its function is as follows. Protease subunit of a proteasome-like degradation complex believed to be a general protein degrading machinery. The sequence is that of ATP-dependent protease subunit HslV from Hydrogenovibrio crunogenus (strain DSM 25203 / XCL-2) (Thiomicrospira crunogena).